The sequence spans 439 residues: Packaging protein 1 (439 aa).

A compositionally biased stretch (polar residues) spans 1–23; that stretch reads MSTQIPARQETYDPSQSSGTKTP. Residues 1–42 are disordered; sequence MSTQIPARQETYDPSQSSGTKTPSHPYDGNPTRSYPKRNAGK. 151–158 is an ATP binding site; sequence GPTGSGKS. Residues 419–439 form a DNA-binding region; it reads ERNPKLTDLEKLSPPGTFQET.

It belongs to the adenoviridae packaging protein 1 family. Homodimer. Part of a genome packaging complex composed of packaging proteins 1, 2 and 3; this complex specifically binds to the packaging sequence on the left end of viral genomic DNA and performs packaging of the viral genome. Interacts with protein 33K.

The protein resides in the virion. The protein localises to the host nucleus. Its subcellular location is the host nucleoplasm. It localises to the host nucleolus. Functionally, component of the packaging machinery which encapsidates the viral DNA into preformed capsids and transcriptional activator of the viral major late promoter (MLP). Binds, along with packaging proteins 2 and 3, to the specific packaging sequence on the left end of viral genomic DNA and displays ATPase activity thereby providing the power stroke of the packaging machinery. The activity of packaging protein IVa2 is stimulated by protein 33K which acts as a terminase. May be the protein that pumps DNA into the capsid powered by ATP hydrolysis. Specifically binds to the 5'-CG-3' nucleotides of the repeats making up the packaging sequence. Component of the DEF-A and DEF-B transcription factors that bind downstream elements of the major late promoter (MLP), and stimulate transcription from the MLP after initiation of viral DNA replication. DEF-A is a heterodimer packaging proteins 1 and 2 and DEF-B is a homodimer of packaging protein 1. The chain is Packaging protein 1 from Fowl adenovirus A serotype 1 (strain CELO / Phelps) (FAdV-1).